Here is a 207-residue protein sequence, read N- to C-terminus: Large ribosomal subunit protein uL4 (207 aa).

Residues 50-75 (KTKTRSEVAGSGKKPFKQKGTGNARQ) form a disordered region.

Belongs to the universal ribosomal protein uL4 family. As to quaternary structure, part of the 50S ribosomal subunit.

One of the primary rRNA binding proteins, this protein initially binds near the 5'-end of the 23S rRNA. It is important during the early stages of 50S assembly. It makes multiple contacts with different domains of the 23S rRNA in the assembled 50S subunit and ribosome. In terms of biological role, forms part of the polypeptide exit tunnel. The protein is Large ribosomal subunit protein uL4 of Pelobacter propionicus (strain DSM 2379 / NBRC 103807 / OttBd1).